A 637-amino-acid polypeptide reads, in one-letter code: Poly [ADP-ribose] polymerase 2 (637 aa).

A DNA-binding region spans residues 1 to 140 (MANKLKVDEL…KKEEKIVTAT (140 aa)). The SAP 1 domain maps to 2–36 (ANKLKVDELRLKLAERGLSTTGVKAVLVERLEEAI). The span at 35 to 46 (AIAEDTKKEESK) shows a compositional bias: basic and acidic residues. The disordered stretch occupies residues 35 to 56 (AIAEDTKKEESKSKRKRNSSND). Residues 41–62 (KKEESKSKRKRNSSNDTYESNK) carry the Nuclear localization signal motif. In terms of domain architecture, SAP 2 spans 69–103 (FRGMIVKELREEAIKRGLDTTGTKKDLLERLCNDA). Over residues 106–117 (VSNAPVKSSNGT) the composition is skewed to polar residues. The interval 106–134 (VSNAPVKSSNGTDEAEDDNNGFEEEKKEE) is disordered. Residues 118 to 127 (DEAEDDNNGF) are compositionally biased toward acidic residues. Positions 158–255 (QYHVLQRGDD…KEFIPHPKSY (98 aa)) constitute a WGR domain. Residues 286 to 404 (QSKLDTRVAK…EIELATKLLS (119 aa)) form the PARP alpha-helical domain. The PARP catalytic domain maps to 412–637 (DPLYYHYQQL…VIQVKFNYKH (226 aa)).

The protein belongs to the ARTD/PARP family.

The protein localises to the nucleus. It catalyses the reaction NAD(+) + (ADP-D-ribosyl)n-acceptor = nicotinamide + (ADP-D-ribosyl)n+1-acceptor + H(+).. The enzyme catalyses L-aspartyl-[protein] + NAD(+) = 4-O-(ADP-D-ribosyl)-L-aspartyl-[protein] + nicotinamide. It carries out the reaction L-glutamyl-[protein] + NAD(+) = 5-O-(ADP-D-ribosyl)-L-glutamyl-[protein] + nicotinamide. In terms of biological role, involved in the base excision repair (BER) pathway, by catalyzing the poly(ADP-ribosyl)ation of a limited number of acceptor proteins involved in chromatin architecture and in DNA metabolism. This modification follows DNA damages and appears as an obligatory step in a detection/signaling pathway leading to the reparation of DNA strand breaks. The chain is Poly [ADP-ribose] polymerase 2 (PARP2) from Arabidopsis thaliana (Mouse-ear cress).